We begin with the raw amino-acid sequence, 190 residues long: Xanthine phosphoribosyltransferase 2 (190 aa).

2 residues coordinate xanthine: Leu20 and Asn27. Ala129–Ala133 serves as a coordination point for 5-phospho-alpha-D-ribose 1-diphosphate. A xanthine-binding site is contributed by Lys157.

The protein belongs to the purine/pyrimidine phosphoribosyltransferase family. Xpt subfamily. As to quaternary structure, homodimer.

Its subcellular location is the cytoplasm. It catalyses the reaction XMP + diphosphate = xanthine + 5-phospho-alpha-D-ribose 1-diphosphate. It functions in the pathway purine metabolism; XMP biosynthesis via salvage pathway; XMP from xanthine: step 1/1. Its function is as follows. Converts the preformed base xanthine, a product of nucleic acid breakdown, to xanthosine 5'-monophosphate (XMP), so it can be reused for RNA or DNA synthesis. The sequence is that of Xanthine phosphoribosyltransferase 2 from Clostridium botulinum (strain ATCC 19397 / Type A).